We begin with the raw amino-acid sequence, 492 residues long: B3 domain-containing protein REM3 (492 aa).

A DNA-binding region (TF-B3 1) is located at residues 12–104 (NRPFFVRSLA…VFHVTPSGRS (93 aa)). The segment covering 105–116 (FSQIRTSSSSGD) has biased composition (low complexity). The segment at 105–134 (FSQIRTSSSSGDYDSDDDDDEAGDDDSDSK) is disordered. Residues 117–131 (YDSDDDDDEAGDDDS) show a composition bias toward acidic residues. DNA-binding regions (TF-B3) lie at residues 154–250 (YCLL…LCFK) and 286–382 (FLTV…FCSE). The segment covering 385-395 (IEQEEAPEERG) has biased composition (basic and acidic residues). Residues 385–427 (IEQEEAPEERGTPLPKRARVSAEVGHSRRTQAPNKSSDDPKIL) are disordered.

Its subcellular location is the nucleus. The chain is B3 domain-containing protein REM3 (REM3) from Arabidopsis thaliana (Mouse-ear cress).